A 369-amino-acid polypeptide reads, in one-letter code: UPF0283 membrane protein RPA1583 (369 aa).

A disordered region spans residues 1–61 (MTERVPPRRP…APPPPPPRAR (61 aa)). Residues 34 to 51 (AKPSAKADARPAASAAGA) show a composition bias toward low complexity. Helical transmembrane passes span 90–110 (WGTV…WLWI), 124–144 (LGTI…IIIG), and 239–259 (VSLV…VAIA).

The protein belongs to the UPF0283 family.

Its subcellular location is the cell inner membrane. The polypeptide is UPF0283 membrane protein RPA1583 (Rhodopseudomonas palustris (strain ATCC BAA-98 / CGA009)).